We begin with the raw amino-acid sequence, 247 residues long: MTKGILGRKVGMTQVFTDKGELIPVTVIEALPNVVLQVKTPETDGYSALQLGVFDKRKIAANKPEQGHAKKASAAPKRYVREIRDAQGDYKQGDKVKVDVFAAGEYVDVQGITKGHGFQGSIKRLGQSRGPMAHGSRYHRRPGSMGSIINKVFKGKLLPGQMGGDLRTAQKLLVAGVDPANNLILIKGNVPGANKSFVTIKSTVKPFKASKIKLGGTVGQEVKAEAKDTASTEKKQAETKNDSASAE.

Disordered stretches follow at residues 124-145 (RLGQ…PGSM) and 218-247 (VGQE…ASAE). Basic and acidic residues predominate over residues 222 to 241 (VKAEAKDTASTEKKQAETKN).

The protein belongs to the universal ribosomal protein uL3 family. As to quaternary structure, part of the 50S ribosomal subunit. Forms a cluster with proteins L14 and L19.

One of the primary rRNA binding proteins, it binds directly near the 3'-end of the 23S rRNA, where it nucleates assembly of the 50S subunit. The protein is Large ribosomal subunit protein uL3 of Oenococcus oeni (strain ATCC BAA-331 / PSU-1).